Here is a 62-residue protein sequence, read N- to C-terminus: Histone H1.2, embryonic (62 aa).

In terms of domain architecture, H15 spans 1-53; sequence HVVAAITALKERGGSSMKKQSVFIKKALKSGVEKGTLVQVKGKGASGSFKLGK.

The protein belongs to the histone H1/H5 family.

The protein localises to the nucleus. Its subcellular location is the chromosome. Its function is as follows. Histones H1 are necessary for the condensation of nucleosome chains into higher-order structures. This is Histone H1.2, embryonic from Parechinus angulosus (Angulate sea urchin).